The following is a 471-amino-acid chain: 3-isopropylmalate dehydratase large subunit (471 aa).

Cys349, Cys409, and Cys412 together coordinate [4Fe-4S] cluster.

It belongs to the aconitase/IPM isomerase family. LeuC type 1 subfamily. In terms of assembly, heterodimer of LeuC and LeuD. [4Fe-4S] cluster serves as cofactor.

The enzyme catalyses (2R,3S)-3-isopropylmalate = (2S)-2-isopropylmalate. Its pathway is amino-acid biosynthesis; L-leucine biosynthesis; L-leucine from 3-methyl-2-oxobutanoate: step 2/4. Catalyzes the isomerization between 2-isopropylmalate and 3-isopropylmalate, via the formation of 2-isopropylmaleate. In Aliivibrio salmonicida (strain LFI1238) (Vibrio salmonicida (strain LFI1238)), this protein is 3-isopropylmalate dehydratase large subunit.